Here is a 550-residue protein sequence, read N- to C-terminus: Chaperonin GroEL 1 (550 aa).

Residues 29–32 (TIGP), 86–90 (DGTTT), glycine 413, 477–479 (NAA), and aspartate 493 contribute to the ATP site. Residues 524–550 (AVSDGDHGHSHGHGHSHGHSHPQGPGF) are disordered. The span at 533-543 (SHGHGHSHGHS) shows a compositional bias: basic residues.

Belongs to the chaperonin (HSP60) family. Forms a cylinder of 14 subunits composed of two heptameric rings stacked back-to-back. Interacts with the co-chaperonin GroES.

The protein localises to the cytoplasm. It catalyses the reaction ATP + H2O + a folded polypeptide = ADP + phosphate + an unfolded polypeptide.. In terms of biological role, together with its co-chaperonin GroES, plays an essential role in assisting protein folding. The GroEL-GroES system forms a nano-cage that allows encapsulation of the non-native substrate proteins and provides a physical environment optimized to promote and accelerate protein folding. In Frankia alni (strain DSM 45986 / CECT 9034 / ACN14a), this protein is Chaperonin GroEL 1.